The following is a 384-amino-acid chain: S-adenosylmethionine synthase (384 aa).

His15 provides a ligand contact to ATP. A Mg(2+)-binding site is contributed by Asp17. Residue Glu43 coordinates K(+). The L-methionine site is built by Glu56 and Gln99. The segment at 99–109 (QSPDINQGVDR) is flexible loop. ATP-binding positions include 164-166 (DAK), 230-231 (RF), Asp239, 245-246 (RK), Ala262, and Lys266. Asp239 is an L-methionine binding site. Residue Lys270 coordinates L-methionine.

The protein belongs to the AdoMet synthase family. In terms of assembly, homotetramer; dimer of dimers. Mg(2+) serves as cofactor. Requires K(+) as cofactor.

It localises to the cytoplasm. It carries out the reaction L-methionine + ATP + H2O = S-adenosyl-L-methionine + phosphate + diphosphate. The protein operates within amino-acid biosynthesis; S-adenosyl-L-methionine biosynthesis; S-adenosyl-L-methionine from L-methionine: step 1/1. In terms of biological role, catalyzes the formation of S-adenosylmethionine (AdoMet) from methionine and ATP. The overall synthetic reaction is composed of two sequential steps, AdoMet formation and the subsequent tripolyphosphate hydrolysis which occurs prior to release of AdoMet from the enzyme. The chain is S-adenosylmethionine synthase from Citrobacter koseri (strain ATCC BAA-895 / CDC 4225-83 / SGSC4696).